The following is a 610-amino-acid chain: Elongation factor 4 (610 aa).

The region spanning 12–194 (EKIRNFSIIA…QIVEKVPAPQ (183 aa)) is the tr-type G domain. Residues 24–29 (DHGKST) and 141–144 (NKID) contribute to the GTP site.

It belongs to the TRAFAC class translation factor GTPase superfamily. Classic translation factor GTPase family. LepA subfamily.

Its subcellular location is the cell membrane. The catalysed reaction is GTP + H2O = GDP + phosphate + H(+). Required for accurate and efficient protein synthesis under certain stress conditions. May act as a fidelity factor of the translation reaction, by catalyzing a one-codon backward translocation of tRNAs on improperly translocated ribosomes. Back-translocation proceeds from a post-translocation (POST) complex to a pre-translocation (PRE) complex, thus giving elongation factor G a second chance to translocate the tRNAs correctly. Binds to ribosomes in a GTP-dependent manner. This is Elongation factor 4 from Streptococcus thermophilus (strain CNRZ 1066).